Consider the following 655-residue polypeptide: HDA1 complex subunit 3 (655 aa).

Positions 482-632 (HELEVENNLK…KTMDNLENLT (151 aa)) form a coiled coil. The disordered stretch occupies residues 635–655 (RVRTQNGNTKKKSRAKKPGNV). Residues 643-655 (TKKKSRAKKPGNV) show a composition bias toward basic residues.

The protein belongs to the HDA2/3 family. HDA3 subfamily. As to quaternary structure, heterodimer with HDA2. Component of the HDA1 histone deacetylase complex composed of at least one HDA1 homodimer and one HDA2/HDA3 heterodimer. Interacts with HDA1 and HDA3.

It is found in the nucleus. In terms of biological role, required for activity of HDA1 histone deacetylase complex. The HDA1 histone deacetylase complex is responsible for the deacetylation of lysine residues on the N-terminal part of the core histones (H2A, H2B, H3 and H4). Histone deacetylation gives a tag for epigenetic repression and plays an important role in transcriptional regulation, cell cycle progression and developmental events. The sequence is that of HDA1 complex subunit 3 (HDA3) from Saccharomyces cerevisiae (strain ATCC 204508 / S288c) (Baker's yeast).